Reading from the N-terminus, the 76-residue chain is Sec-independent protein translocase protein TatA (76 aa).

Residues 1–21 (MLGGLTGWHLLIILAVILLLF) form a helical membrane-spanning segment. Residues 44 to 57 (VNEMKKDGDKDKGE) show a composition bias toward basic and acidic residues. The interval 44–76 (VNEMKKDGDKDKGEGGSTAPATDTGASSEQNSK) is disordered. Residues 62-76 (APATDTGASSEQNSK) show a composition bias toward polar residues.

This sequence belongs to the TatA/E family. In terms of assembly, the Tat system comprises two distinct complexes: a TatABC complex, containing multiple copies of TatA, TatB and TatC subunits, and a separate TatA complex, containing only TatA subunits. Substrates initially bind to the TatABC complex, which probably triggers association of the separate TatA complex to form the active translocon.

Its subcellular location is the cell membrane. Functionally, part of the twin-arginine translocation (Tat) system that transports large folded proteins containing a characteristic twin-arginine motif in their signal peptide across membranes. TatA could form the protein-conducting channel of the Tat system. This chain is Sec-independent protein translocase protein TatA, found in Leifsonia xyli subsp. xyli (strain CTCB07).